We begin with the raw amino-acid sequence, 128 residues long: Sulfurtransferase TusD (128 aa).

The active-site Cysteine persulfide intermediate is the Cys78.

The protein belongs to the DsrE/TusD family. As to quaternary structure, heterohexamer, formed by a dimer of trimers. The hexameric TusBCD complex contains 2 copies each of TusB, TusC and TusD. The TusBCD complex interacts with TusE.

The protein resides in the cytoplasm. Part of a sulfur-relay system required for 2-thiolation of 5-methylaminomethyl-2-thiouridine (mnm(5)s(2)U) at tRNA wobble positions. Accepts sulfur from TusA and transfers it in turn to TusE. The polypeptide is Sulfurtransferase TusD (Salmonella newport (strain SL254)).